The following is a 785-amino-acid chain: Conidiophore development regulator abaA (785 aa).

Residues 1–22 (MAEWQTECMLPPTQPGFEGVGP) form a disordered region. The TEA DNA-binding region spans 130–204 (GKDGEPVWSD…QVLDSFLKGD (75 aa)). Residues 213 to 232 (EQPADRSNGQPPSAGPRWRN) are disordered.

This sequence belongs to the TEC1 family.

Its subcellular location is the nucleus. Functionally, brlA, abaA and wetA are pivotal regulators of conidiophore development and conidium maturation. They act individually and together to regulate their own expression and that of numerous other sporulation-specific genes. Binds to the sequence 5'-CATTCY-3', where Y is a pyrimidine, making both major- and minor-groove contacts. Controls expression of wetA. The chain is Conidiophore development regulator abaA from Aspergillus oryzae (strain ATCC 42149 / RIB 40) (Yellow koji mold).